A 140-amino-acid polypeptide reads, in one-letter code: Baculoviral IAP repeat-containing protein 5 (140 aa).

The BIR repeat unit spans residues 18 to 88 (RIATFKNWPF…KHSPGCAFLT (71 aa)). K23 bears the N6-acetyllysine mark. Residue T34 is modified to Phosphothreonine; by CDK1 and CDK15. T48 carries the post-translational modification Phosphothreonine. Zn(2+)-binding residues include C57, C60, E76, H77, H80, and C84. An N6-acetyllysine mark is found at K90, K110, K112, and K115. Residues 113-129 (IAKETNNKQKEFEETAK) are compositionally biased toward basic and acidic residues. The interval 113-140 (IAKETNNKQKEFEETAKTTRQSIEQLAA) is disordered. Residue T117 is modified to Phosphothreonine; by AURKB. N6-acetyllysine is present on K129. A compositionally biased stretch (polar residues) spans 130 to 140 (TTRQSIEQLAA).

The protein belongs to the IAP family. Monomer or homodimer. Exists as a homodimer in the apo state and as a monomer in the CPC-bound state. The monomer protects cells against apoptosis more efficiently than the dimer. Only the dimeric form is capable of enhancing tubulin stability in cells. When phosphorylated, interacts with LAMTOR5/HBXIP; the resulting complex binds pro-CASP9, as well as active CASP9, but much less efficiently. Component of the chromosomal passenger complex (CPC) composed of at least BIRC5/survivin, CDCA8/borealin, INCENP, AURKB or AURKC; in the complex forms a triple-helix bundle-based subcomplex with INCENP and CDCA8. Interacts with JTB. Interacts (via BIR domain) with histone H3 phosphorylated at 'Thr-3' (H3pT3). Interacts with EVI5. Interacts with GTP-bound RAN in both the S and M phases of the cell cycle. Interacts with USP9X. Interacts with tubulin. Interacts with BIRC2/c-IAP1. The acetylated form at Lys-129 interacts with STAT3. The monomeric form deacetylated at Lys-129 interacts with XPO1/CRM1. The monomeric form interacts with XIAP/BIRC4. Both the dimeric and monomeric form can interact with DIABLO/SMAC. Interacts with BIRC6/bruce. Interacts with FBXL7; this interaction facilitates the polyubiquitination and subsequent proteasomal degradation of BIRC5 by the SCF(FBXL7) E3 ubiquitin-protein ligase complex. In terms of processing, ubiquitinated by the Cul9-RING ubiquitin-protein ligase complex, leading to its degradation. Ubiquitination is required for centrosomal targeting. Deubiquitinated by USP35 or USP38; leading to stabilization. Acetylation at Lys-129 results in its homodimerization, while deacetylation promotes the formation of monomers which heterodimerize with XPO1/CRM1 which facilitates its nuclear export. The acetylated form represses STAT3 transactivation. The dynamic equilibrium between its acetylation and deacetylation at Lys-129 determines its interaction with XPO1/CRM1, its subsequent subcellular localization, and its ability to inhibit STAT3 transactivation. Post-translationally, in vitro phosphorylation at Thr-117 by AURKB prevents interaction with INCENP and localization to mitotic chromosomes. Phosphorylation at Thr-48 by CK2 is critical for its mitotic and anti-apoptotic activities. Phosphorylation at Thr-34 by CDK15 is critical for its anti-apoptotic activity.

The protein resides in the cytoplasm. Its subcellular location is the nucleus. The protein localises to the chromosome. It localises to the centromere. It is found in the cytoskeleton. The protein resides in the spindle. Its subcellular location is the kinetochore. The protein localises to the midbody. Functionally, multitasking protein that has dual roles in promoting cell proliferation and preventing apoptosis. Component of a chromosome passage protein complex (CPC) which is essential for chromosome alignment and segregation during mitosis and cytokinesis. Acts as an important regulator of the localization of this complex; directs CPC movement to different locations from the inner centromere during prometaphase to midbody during cytokinesis and participates in the organization of the center spindle by associating with polymerized microtubules. Involved in the recruitment of CPC to centromeres during early mitosis via association with histone H3 phosphorylated at 'Thr-3' (H3pT3) during mitosis. The complex with RAN plays a role in mitotic spindle formation by serving as a physical scaffold to help deliver the RAN effector molecule TPX2 to microtubules. May counteract a default induction of apoptosis in G2/M phase. The acetylated form represses STAT3 transactivation of target gene promoters. May play a role in neoplasia. Inhibitor of CASP3 and CASP7. Essential for the maintenance of mitochondrial integrity and function. The protein is Baculoviral IAP repeat-containing protein 5 (Birc5) of Mus musculus (Mouse).